A 399-amino-acid polypeptide reads, in one-letter code: Sister chromatid cohesion protein DCC1 (399 aa).

It belongs to the DCC1 family. Component of the CTF18-RFC complex which consists of CTF8, CTF18, DSCC1 and the RFC complex. Interacts with CTF8 and CTF18. Interacts with DDX11.

It is found in the nucleus. In terms of biological role, loads PCNA onto primed templates regulating velocity, spacing and restart activity of replication forks. May couple DNA replication to sister chromatid cohesion through regulation of the acetylation of the cohesin subunit SMC3. This chain is Sister chromatid cohesion protein DCC1 (DSCC1), found in Mus musculus (Mouse).